Consider the following 322-residue polypeptide: MLNSFKLSLQYILPKLWLTRLAGWGASKRAGWLTKLVIDLFVKYYKVDMKEAQKPDTASYRTFNEFFVRPLRDEVRPIDTDPNVLVMPADGVISQLGKIEEDKILQAKGHNYSLEALLAGNYLMADLFRNGTFVTTYLSPRDYHRVHMPCNGILREMIYVPGDLFSVNHLTAQNVPNLFARNERVICLFDTEFGPMAQILVGATIVGSIETVWAGTITPPREGIIKRWTWPAGENDGSVALLKGQEMGRFKLGSTVINLFAPGKVNLVEQLESLSVTKIGQPLAVSTETFVTPDAEPSPLPAEEIEAEHDASPLVDDKKDQV.

Residues aspartate 90, histidine 147, and serine 254 each act as charge relay system; for autoendoproteolytic cleavage activity in the active site. The Schiff-base intermediate with substrate; via pyruvic acid; for decarboxylase activity role is filled by serine 254. Serine 254 carries the pyruvic acid (Ser); by autocatalysis modification. The tract at residues 292-322 (TPDAEPSPLPAEEIEAEHDASPLVDDKKDQV) is disordered. Over residues 308 to 322 (EHDASPLVDDKKDQV) the composition is skewed to basic and acidic residues.

This sequence belongs to the phosphatidylserine decarboxylase family. PSD-B subfamily. Prokaryotic type I sub-subfamily. As to quaternary structure, heterodimer of a large membrane-associated beta subunit and a small pyruvoyl-containing alpha subunit. It depends on pyruvate as a cofactor. Post-translationally, is synthesized initially as an inactive proenzyme. Formation of the active enzyme involves a self-maturation process in which the active site pyruvoyl group is generated from an internal serine residue via an autocatalytic post-translational modification. Two non-identical subunits are generated from the proenzyme in this reaction, and the pyruvate is formed at the N-terminus of the alpha chain, which is derived from the carboxyl end of the proenzyme. The autoendoproteolytic cleavage occurs by a canonical serine protease mechanism, in which the side chain hydroxyl group of the serine supplies its oxygen atom to form the C-terminus of the beta chain, while the remainder of the serine residue undergoes an oxidative deamination to produce ammonia and the pyruvoyl prosthetic group on the alpha chain. During this reaction, the Ser that is part of the protease active site of the proenzyme becomes the pyruvoyl prosthetic group, which constitutes an essential element of the active site of the mature decarboxylase.

It is found in the cell membrane. It catalyses the reaction a 1,2-diacyl-sn-glycero-3-phospho-L-serine + H(+) = a 1,2-diacyl-sn-glycero-3-phosphoethanolamine + CO2. Its pathway is phospholipid metabolism; phosphatidylethanolamine biosynthesis; phosphatidylethanolamine from CDP-diacylglycerol: step 2/2. Functionally, catalyzes the formation of phosphatidylethanolamine (PtdEtn) from phosphatidylserine (PtdSer). The sequence is that of Phosphatidylserine decarboxylase proenzyme from Escherichia coli O7:K1 (strain IAI39 / ExPEC).